The sequence spans 280 residues: Cytochrome bc1 complex cytochrome c subunit (280 aa).

A helical transmembrane segment spans residues 25 to 45 (LSGGVLLLIALTIAGGLAAVL). Cytochrome c domains lie at 60–140 (ALLR…QANG) and 161–239 (NDLG…KVAT). Heme c-binding residues include cysteine 73, cysteine 76, histidine 77, cysteine 174, cysteine 177, and histidine 178. Residues 258–278 (GMAMWIIGMVAAIGLALWIGA) form a helical membrane-spanning segment.

As to quaternary structure, the cytochrome bc1 complex is composed of a cytochrome b (QcrB), the Rieske iron-sulfur protein (QcrA) and a diheme cytochrome c (QcrC) subunit. In terms of processing, binds 2 heme c groups covalently per subunit.

Its subcellular location is the cell membrane. The catalysed reaction is a quinol + 2 Fe(III)-[cytochrome c](out) = a quinone + 2 Fe(II)-[cytochrome c](out) + 2 H(+)(out). Functionally, cytochrome b subunit of the cytochrome bc1 complex, an essential component of the respiratory electron transport chain required for ATP synthesis. The bc1 complex catalyzes the oxidation of ubiquinol and the reduction of cytochrome c in the respiratory chain. The bc1 complex operates through a Q-cycle mechanism that couples electron transfer to generation of the proton gradient that drives ATP synthesis. The sequence is that of Cytochrome bc1 complex cytochrome c subunit (qcrC) from Mycobacterium bovis (strain ATCC BAA-935 / AF2122/97).